A 676-amino-acid chain; its full sequence is MLKLFSAFRKNKIWDFNGGIHPPEMKTQSNGTPLRQVPLAQRFVIPLKQHIGAEGELCVSVGDKVLRGQPLTRGRGKMLPVHAPTSGTVTAIAPHSTAHPSALAELSVIIDADGEDCWIPRDGWDDYRSRSREELIERIHQFGVAGLGGAGFPTGVKLQGGGDKIETLIINAAECEPYITADDRLMQDCAAQVVEGIRILAHILQPREILIGIEDNKPQAISMLRAVLADSHDISLRVIPTKYPSGGAKQLTYILTGKQVPHGGRSSDIGVLMQNVGTAYAVKRAVIDGEPITERVVTLTGEAIARPGNVWARLGTPVRHLLNDAGFCPSADQMVIMGGPLMGFTLPWLDVPVVKITNCLLAPSANELGEPQEEQNCIRCSACADACPADLLPQQLYWFSKGQQHDKATTHNIADCIECGACAWVCPSNIPLVQYFRQEKAEIAAIRQEEKRAAEAKARFEARQARLEREKAARLERHKSAAVQPAAKDKDAIAAALARVKEKQAQATQPIVIKAGERPDNSAIIAAREARKAQARAKQAELQQTNDAATVADPRKTAVEAAIARAKARKLEQQQANAEPEQQVDPRKAAVEAAIARAKARKLEQQQANAEPEQQVDPRKAAVEAAIARAKARKLEQQQANAEPEEQVDPRKAAVAAAIARVQAKKAAQQKVVNED.

4Fe-4S ferredoxin-type domains are found at residues 369-397 and 407-436; these read GEPQEEQNCIRCSACADACPADLLPQQLY and KATTHNIADCIECGACAWVCPSNIPLVQYF. Positions 377, 380, 383, 387, 416, 419, 422, and 426 each coordinate [4Fe-4S] cluster. Positions 600–652 are disordered; it reads ARKLEQQQANAEPEQQVDPRKAAVEAAIARAKARKLEQQQANAEPEEQVDPRK. A compositionally biased stretch (low complexity) spans 605 to 615; it reads QQQANAEPEQQ.

This sequence belongs to the 4Fe4S bacterial-type ferredoxin family. RnfC subfamily. The complex is composed of six subunits: RsxA, RsxB, RsxC, RsxD, RsxE and RsxG. [4Fe-4S] cluster serves as cofactor.

It is found in the cell inner membrane. In terms of biological role, part of a membrane-bound complex that couples electron transfer with translocation of ions across the membrane. Required to maintain the reduced state of SoxR. The chain is Ion-translocating oxidoreductase complex subunit C from Escherichia coli (strain SMS-3-5 / SECEC).